The following is a 306-amino-acid chain: Recombination-associated protein RdgC (306 aa).

Belongs to the RdgC family.

The protein resides in the cytoplasm. Its subcellular location is the nucleoid. Functionally, may be involved in recombination. This Pseudomonas fluorescens (strain Pf0-1) protein is Recombination-associated protein RdgC.